The sequence spans 977 residues: MRLPLPSDLPATLQPLVTRNQQFISDAVAGHPELDLQAWSPLHRQQFDQVAAASEFVLSLAQREPAMLFALLASGELERRYAPGELRGQIAATAQAAQSEDELARNLRRARNRQQLRIIWRDITRQAELGETCRDLSDLADAAIDEAYQWLYPRHCQQFGTPIGNRSGQPQHMVVLGMGKLGAVELNLSSDIDLIFGFPEGGETEGVKRSLDNQEFFTRLGQRLIKALDPVTVDGFVFRVDMRLRPYGSAGALVLSFNALEQYYQDQGRDWERYAMIKARVVAGDQAAGAQLQEMLRPFVYRRYLDFSAIEALRTMKQLIQQEVRRKGMAENIKLGAGGIREVEFIAQAFQLIHGGRDLSLQQRPLLKVLATLEGQGYLPPAVVAELREGYEFLRYTEHAIQAIADRQTQMLPEGETDQARVAYVLGFADWQSFHDQLMYWRGRIDWHFRQVIADPDDEDGEGELVVGGEWSPLWEQAQDEEAAGRQLQEAGFKQPAEALRRLAGLRSSPQLRSMQRIGRERLDAFIPRLLAQAVEHDNPDLVLERVLPLVEAVARRSAYLVLLTENPGALRRLLTLCAASPWIAEQIALYPLLLDELLNEGRLFSPPLAPELASELRERLTRIPEDDLEQQMEALRHFKLAHSLRVAASEISGNLPLMKVSDYLTWLAEAILDQVLALAWRQTVARHGQPKRSDGSLCDPGFIIIGYGKMGGLELGHGSDLDLVFIHDGDPQAETDGAKPIDSAQFFTRLGQRIIHLLTTQTNSGQLYDVDMRLRPSGASGLLVSSLGAFERYQQNEAWTWEHQALVRARVLVGCKQVGAAFEGVRAKVLGQARDLEKLRGEVSEMRAKMRDNLGTKATAAGTAANAFDAGVPFDIKQDAGGIVDIEFMVQYAALAWSHDHPAILRWTDNIRILEELEQANLMPASDAVLLREVYKAFRSASHRQALQKEAGVIDAAQFADERREVRRIWGELGLS.

Positions 1–457 are adenylyl removase; sequence MRLPLPSDLP…HFRQVIADPD (457 aa). The interval 468 to 977 is adenylyl transferase; that stretch reads GGEWSPLWEQ…RRIWGELGLS (510 aa).

Belongs to the GlnE family. It depends on Mg(2+) as a cofactor.

It catalyses the reaction [glutamine synthetase]-O(4)-(5'-adenylyl)-L-tyrosine + phosphate = [glutamine synthetase]-L-tyrosine + ADP. The catalysed reaction is [glutamine synthetase]-L-tyrosine + ATP = [glutamine synthetase]-O(4)-(5'-adenylyl)-L-tyrosine + diphosphate. Involved in the regulation of glutamine synthetase GlnA, a key enzyme in the process to assimilate ammonia. When cellular nitrogen levels are high, the C-terminal adenylyl transferase (AT) inactivates GlnA by covalent transfer of an adenylyl group from ATP to specific tyrosine residue of GlnA, thus reducing its activity. Conversely, when nitrogen levels are low, the N-terminal adenylyl removase (AR) activates GlnA by removing the adenylyl group by phosphorolysis, increasing its activity. The regulatory region of GlnE binds the signal transduction protein PII (GlnB) which indicates the nitrogen status of the cell. This is Bifunctional glutamine synthetase adenylyltransferase/adenylyl-removing enzyme from Pseudomonas putida (strain ATCC 47054 / DSM 6125 / CFBP 8728 / NCIMB 11950 / KT2440).